Here is a 209-residue protein sequence, read N- to C-terminus: Ras-related protein Rab-2-A (209 aa).

13–21 (GDTGVGKSC) is a GTP binding site. The Effector region motif lies at 35 to 43 (HDLTIGVEF). GTP contacts are provided by residues 61–65 (DTAGQ), 119–122 (NKCD), and 149–151 (SAK). 2 S-geranylgeranyl cysteine lipidation sites follow: Cys207 and Cys208.

Belongs to the small GTPase superfamily. Rab family.

It is found in the endoplasmic reticulum membrane. Its subcellular location is the golgi apparatus membrane. Functionally, protein transport. Probably involved in vesicular traffic. In Zea mays (Maize), this protein is Ras-related protein Rab-2-A (RAB2A).